The chain runs to 90 residues: Probable Fe(2+)-trafficking protein (90 aa).

It belongs to the Fe(2+)-trafficking protein family.

Functionally, could be a mediator in iron transactions between iron acquisition and iron-requiring processes, such as synthesis and/or repair of Fe-S clusters in biosynthetic enzymes. The chain is Probable Fe(2+)-trafficking protein from Cupriavidus necator (strain ATCC 17699 / DSM 428 / KCTC 22496 / NCIMB 10442 / H16 / Stanier 337) (Ralstonia eutropha).